A 111-amino-acid polypeptide reads, in one-letter code: Cornifelin homolog (111 aa).

Belongs to the cornifelin family.

The sequence is that of Cornifelin homolog (cnfn) from Xenopus tropicalis (Western clawed frog).